We begin with the raw amino-acid sequence, 371 residues long: MSTNEAAASQEDIALAQGAVLVKSCQVPDGSIPIRGFDFSTASGPDFSLSAILSSYMSTGFQATHLAQAIQQVNQMLSLRDTPLTCDDDEKLFPYPEGRQKRSCTIFLGYTSNLVTSGLREVLRYCVQRNLVDCIVTSAGGIEEDLIKCLKPSYLGTFTMDGAKLRSNGMNRAGNVLIPNDNYCAFEDWLMPILDECLVEQEEKHLNWTPSKLIQRLGERIGDESSILYWAAKHRIPVFCPALTDGSLGDMLYFHSVKSSPGLRVDIVEDVRHINTIAVKSFKTGSIILGGGVVKHHINNANLMRNGADHTVYINTGQEFDGSDSGAQPDEAVSWGKVKPSAGAVKVHAEATLVFPLLVAETFAKHEGHKD.

NAD(+)-binding positions include 112–116 (SNLVT), 138–140 (SAG), E144, and D245. Position 143 to 144 (143 to 144 (EE)) interacts with spermidine. Residue D250 coordinates spermidine. G291 lines the NAD(+) pocket. Residue H296 coordinates spermidine. 316–317 (TG) is a binding site for NAD(+). Spermidine is bound by residues 322–324 (GSD) and 331–337 (EAVSWGK). Catalysis depends on K337, which acts as the Nucleophile. 350 to 351 (EA) contacts NAD(+).

Belongs to the deoxyhypusine synthase family. The cofactor is NAD(+).

It carries out the reaction [eIF5A protein]-L-lysine + spermidine = [eIF5A protein]-deoxyhypusine + propane-1,3-diamine. It functions in the pathway protein modification; eIF5A hypusination. In terms of biological role, catalyzes the NAD-dependent oxidative cleavage of spermidine and the subsequent transfer of the butylamine moiety of spermidine to the epsilon-amino group of a critical lysine residue of the eIF-5A precursor protein to form the intermediate deoxyhypusine residue. This is the first step of the post-translational modification of that lysine into an unusual amino acid residue named hypusine. Hypusination is unique to mature eIF-5A factor and is essential for its function. This chain is Deoxyhypusine synthase, found in Caenorhabditis elegans.